We begin with the raw amino-acid sequence, 1475 residues long: Gag-Pol polyprotein (1475 aa).

Over residues 130–147 (TQNTQNKKQTSNQTNTQS) the composition is skewed to low complexity. A disordered region spans residues 130–159 (TQNTQNKKQTSNQTNTQSLPAITTQDGTPR). 2 CCHC-type zinc fingers span residues 403–420 (RRCYGCGKTGHLKRNCKQ) and 421–438 (QKCYHCGKPGHQARNCRS). Residues 492 to 565 (VKGLVDTGAD…TPVNLFGRSL (74 aa)) enclose the Peptidase A2 domain. Asp497 is an active-site residue. One can recognise a Reverse transcriptase domain in the interval 619-806 (EGKISEAAWD…ERVKWIGFEL (188 aa)). In terms of domain architecture, RNase H type-1 spans 999–1119 (RENLTTYYTD…ADEGVKKALE (121 aa)). An Integrase-type zinc finger spans residues 1199-1240 (ENIPSATEDHERWHTSPDILVRQFHLPKRIAKEIVARCQECK). Residues His1208, His1212, Cys1236, and Cys1239 each contribute to the Zn(2+) site. The Integrase catalytic domain occupies 1248-1400 (RGTNPRGRFL…TPYEIYLESE (153 aa)). The integrase-type DNA-binding region spans 1419–1465 (KWCYVRNRRKEWKGPYKVLWDGDGAAVIEEEGKTALYPHRHMRFIPP).

As to quaternary structure, interacts with host light chain cytoplasmic dynein DYNLL1; this interaction is critical for intracellular microtubule-dependent viral genome transport. Post-translationally, specific enzymatic cleavages by the viral protease yield mature proteins. The protease is released by autocatalytic cleavage. The polyprotein is cleaved during and after budding, this process is termed maturation.

The protein localises to the virion. The enzyme catalyses DNA(n) + a 2'-deoxyribonucleoside 5'-triphosphate = DNA(n+1) + diphosphate. It carries out the reaction Endohydrolysis of RNA in RNA/DNA hybrids. Three different cleavage modes: 1. sequence-specific internal cleavage of RNA. Human immunodeficiency virus type 1 and Moloney murine leukemia virus enzymes prefer to cleave the RNA strand one nucleotide away from the RNA-DNA junction. 2. RNA 5'-end directed cleavage 13-19 nucleotides from the RNA end. 3. DNA 3'-end directed cleavage 15-20 nucleotides away from the primer terminus.. It catalyses the reaction 3'-end directed exonucleolytic cleavage of viral RNA-DNA hybrid.. Its function is as follows. Matrix protein p16 forms the outer shell of the core of the virus, lining the inner surface of the viral membrane. Functionally, capsid protein p26 forms the conical core of the virus that encapsulates the genomic RNA-nucleocapsid complex. Interaction between incoming particle-associated Gag proteins and host dynein allows intracellular microtubule-dependent virus transport toward the perinuclear region, prior to nucleus translocation and integration into host genome. In terms of biological role, the aspartyl protease mediates proteolytic cleavages of Gag and Gag-Pol polyproteins during or shortly after the release of the virion from the plasma membrane. Cleavages take place as an ordered, step-wise cascade to yield mature proteins. This process is called maturation. Displays maximal activity during the budding process just prior to particle release from the cell. Reverse transcriptase/ribonuclease H (RT) is a multifunctional enzyme that converts the viral RNA genome into dsDNA in the cytoplasm, shortly after virus entry into the cell. This enzyme displays a DNA polymerase activity that can copy either DNA or RNA templates, and a ribonuclease H (RNase H) activity that cleaves the RNA strand of RNA-DNA heteroduplexes in a partially processive 3' to 5' endonucleasic mode. Conversion of viral genomic RNA into dsDNA requires many steps. A tRNA binds to the primer-binding site (PBS) situated at the 5'-end of the viral RNA. RT uses the 3' end of the tRNA primer to perform a short round of RNA-dependent minus-strand DNA synthesis. The reading proceeds through the U5 region and ends after the repeated (R) region which is present at both ends of viral RNA. The portion of the RNA-DNA heteroduplex is digested by the RNase H, resulting in a ssDNA product attached to the tRNA primer. This ssDNA/tRNA hybridizes with the identical R region situated at the 3' end of viral RNA. This template exchange, known as minus-strand DNA strong stop transfer, can be either intra- or intermolecular. RT uses the 3' end of this newly synthesized short ssDNA to perform the RNA-dependent minus-strand DNA synthesis of the whole template. RNase H digests the RNA template except for a polypurine tract (PPT) situated at the 5'-end of the genome. It is not clear if both polymerase and RNase H activities are simultaneous. RNase H probably can proceed both in a polymerase-dependent (RNA cut into small fragments by the same RT performing DNA synthesis) and a polymerase-independent mode (cleavage of remaining RNA fragments by free RTs). Secondly, RT performs DNA-directed plus-strand DNA synthesis using the PPT that has not been removed by RNase H as primer. PPT and tRNA primers are then removed by RNase H. The 3' and 5' ssDNA PBS regions hybridize to form a circular dsDNA intermediate. Strand displacement synthesis by RT to the PBS and PPT ends produces a blunt ended, linear dsDNA copy of the viral genome that includes long terminal repeats (LTRs) at both ends. Its function is as follows. Integrase catalyzes viral DNA integration into the host chromosome, by performing a series of DNA cutting and joining reactions. This enzyme activity takes place after virion entry into a cell and reverse transcription of the RNA genome in dsDNA. The polypeptide is Gag-Pol polyprotein (gag-pol) (Bovine immunodeficiency virus (strain R29) (BIV)).